The primary structure comprises 78 residues: Gas vesicle protein A (78 aa).

Residues Leu9–Lys19 are alpha helix 1. A beta-strand 1 region spans residues Val23–Leu31. The tract at residues Val32–Ile34 is beta turn. The tract at residues Glu35–Val43 is beta-strand 2. Positions Val48 to Thr67 are alpha helix 2.

Belongs to the gas vesicle GvpA family. As to quaternary structure, the gas vesicle shell is 2 nm thick and consists of a single layer of this protein. It forms helical ribs nearly perpendicular to the long axis of the vesicle. Modeled as antiparallel homodimers.

Its subcellular location is the gas vesicle shell. Its function is as follows. Gas vesicles are hollow, gas filled proteinaceous nanostructures found in some microorganisms. During planktonic growth they allow positioning of the organism at a favorable depth for light or nutrient acquisition. GvpA forms the protein shell. This gene replaces p-gvpA of H.salinarum very poorly, only about 1% of GVs are formed; the few gas vesicles formed are quite strong with a very high critical collapse pressure (CCP) of 0.213 MPa. In terms of biological role, expression of a 9.5 kb mc-vac DNA fragment containing 2 divergently transcribed regions (gvpD-gvpE-gvpF-gvpG-gvpH-gvpI-gvpJ-gvpK-gvpL-gvpM and gvpA-gvpC-gvpN-gvpO) allows H.volcanii to produce gas vesicles. This is Gas vesicle protein A from Haloferax mediterranei (strain ATCC 33500 / DSM 1411 / JCM 8866 / NBRC 14739 / NCIMB 2177 / R-4) (Halobacterium mediterranei).